Here is a 621-residue protein sequence, read N- to C-terminus: Microbial serine proteinase (621 aa).

A signal peptide spans 1–24 (MRKTSLALAISALLSALPIASVQA). The region spanning 68-440 (PRGGMAGNDL…FGLVDVNKTQ (373 aa)) is the Peptidase S8 domain. D98 acts as the Charge relay system in catalysis. The disordered stretch occupies residues 114–133 (PGSKNVVTGGSDPTPTDPDR). Catalysis depends on charge relay system residues H137 and S354. In terms of domain architecture, P/Homo B spans 454–619 (AVALAKGKGN…GYSVLGHDAA (166 aa)). The disordered stretch occupies residues 457–485 (LAKGKGNGRSPSAPSRYVGSSPTRSSTQV). Polar residues predominate over residues 465-485 (RSPSAPSRYVGSSPTRSSTQV).

The protein belongs to the peptidase S8 family.

Functionally, agent of furonculosis. The chain is Microbial serine proteinase (aspA) from Aeromonas salmonicida.